The sequence spans 168 residues: Ribosome maturation factor RimP (168 aa).

Belongs to the RimP family.

It is found in the cytoplasm. Required for maturation of 30S ribosomal subunits. This is Ribosome maturation factor RimP from Bordetella bronchiseptica (strain ATCC BAA-588 / NCTC 13252 / RB50) (Alcaligenes bronchisepticus).